A 488-amino-acid chain; its full sequence is Probable cytosol aminopeptidase (488 aa).

The Mn(2+) site is built by K254 and D259. The active site involves K266. Mn(2+)-binding residues include D277, D336, and E338. R340 is an active-site residue.

This sequence belongs to the peptidase M17 family. The cofactor is Mn(2+).

Its subcellular location is the cytoplasm. It carries out the reaction Release of an N-terminal amino acid, Xaa-|-Yaa-, in which Xaa is preferably Leu, but may be other amino acids including Pro although not Arg or Lys, and Yaa may be Pro. Amino acid amides and methyl esters are also readily hydrolyzed, but rates on arylamides are exceedingly low.. The enzyme catalyses Release of an N-terminal amino acid, preferentially leucine, but not glutamic or aspartic acids.. Its function is as follows. Presumably involved in the processing and regular turnover of intracellular proteins. Catalyzes the removal of unsubstituted N-terminal amino acids from various peptides. The protein is Probable cytosol aminopeptidase of Roseiflexus castenholzii (strain DSM 13941 / HLO8).